A 348-amino-acid chain; its full sequence is 4-hydroxyphenylpyruvate dioxygenase (348 aa).

2 VOC domains span residues 11–141 and 151–303; these read GFAF…ITSS and AIDH…IFTE. Positions 154, 232, and 312 each coordinate Fe cation.

The protein belongs to the 4HPPD family. The cofactor is Fe cation.

The catalysed reaction is 3-(4-hydroxyphenyl)pyruvate + O2 = homogentisate + CO2. Functionally, catalyzes the transformation of p-hydroxyphenylpyruvate into HGA. Has hemolytic and brown pigment production activity. The protein is 4-hydroxyphenylpyruvate dioxygenase (lly) of Legionella pneumophila (strain Corby).